The following is a 108-amino-acid chain: ATP synthase peripheral stalk subunit F6, mitochondrial (108 aa).

The transit peptide at 1-32 (MVLQRIFRLSSVLRSAVSVHLKRNIGVTAVAF) directs the protein to the mitochondrion. An N6-acetyllysine mark is found at Lys41, Lys46, and Lys79. Lys84, Lys94, and Lys99 each carry N6-acetyllysine; alternate. N6-succinyllysine; alternate is present on residues Lys84, Lys94, and Lys99. At Lys105 the chain carries N6-acetyllysine. Position 108 is a phosphoserine (Ser108).

The protein belongs to the eukaryotic ATPase subunit F6 family. In terms of assembly, component of the ATP synthase complex composed at least of ATP5F1A/subunit alpha, ATP5F1B/subunit beta, ATP5MC1/subunit c (homooctomer), MT-ATP6/subunit a, MT-ATP8/subunit 8, ATP5ME/subunit e, ATP5MF/subunit f, ATP5MG/subunit g, ATP5MK/subunit k, ATP5MJ/subunit j, ATP5F1C/subunit gamma, ATP5F1D/subunit delta, ATP5F1E/subunit epsilon, ATP5PF/subunit F6, ATP5PB/subunit b, ATP5PD/subunit d, ATP5PO/subunit OSCP. ATP synthase complex consists of a soluble F(1) head domain (subunits alpha(3) and beta(3)) - the catalytic core - and a membrane F(0) domain - the membrane proton channel (subunits c, a, 8, e, f, g, k and j). These two domains are linked by a central stalk (subunits gamma, delta, and epsilon) rotating inside the F1 region and a stationary peripheral stalk (subunits F6, b, d, and OSCP).

The protein resides in the mitochondrion. It is found in the mitochondrion inner membrane. In terms of biological role, subunit F6, of the mitochondrial membrane ATP synthase complex (F(1)F(0) ATP synthase or Complex V) that produces ATP from ADP in the presence of a proton gradient across the membrane which is generated by electron transport complexes of the respiratory chain. ATP synthase complex consist of a soluble F(1) head domain - the catalytic core - and a membrane F(1) domain - the membrane proton channel. These two domains are linked by a central stalk rotating inside the F(1) region and a stationary peripheral stalk. During catalysis, ATP synthesis in the catalytic domain of F(1) is coupled via a rotary mechanism of the central stalk subunits to proton translocation. In vivo, can only synthesize ATP although its ATP hydrolase activity can be activated artificially in vitro. Part of the complex F(0) domain. Part of the complex F(0) domain and the peripheric stalk, which acts as a stator to hold the catalytic alpha(3)beta(3) subcomplex and subunit a/ATP6 static relative to the rotary elements. The chain is ATP synthase peripheral stalk subunit F6, mitochondrial from Mus musculus (Mouse).